Here is a 289-residue protein sequence, read N- to C-terminus: ATP synthase gamma chain (289 aa).

Belongs to the ATPase gamma chain family. F-type ATPases have 2 components, CF(1) - the catalytic core - and CF(0) - the membrane proton channel. CF(1) has five subunits: alpha(3), beta(3), gamma(1), delta(1), epsilon(1). CF(0) has three main subunits: a, b and c.

It is found in the cell inner membrane. Produces ATP from ADP in the presence of a proton gradient across the membrane. The gamma chain is believed to be important in regulating ATPase activity and the flow of protons through the CF(0) complex. This chain is ATP synthase gamma chain, found in Azoarcus sp. (strain BH72).